A 337-amino-acid chain; its full sequence is Phosphate acyltransferase (337 aa).

Belongs to the PlsX family. In terms of assembly, homodimer. Probably interacts with PlsY.

The protein resides in the cytoplasm. The catalysed reaction is a fatty acyl-[ACP] + phosphate = an acyl phosphate + holo-[ACP]. Its pathway is lipid metabolism; phospholipid metabolism. Its function is as follows. Catalyzes the reversible formation of acyl-phosphate (acyl-PO(4)) from acyl-[acyl-carrier-protein] (acyl-ACP). This enzyme utilizes acyl-ACP as fatty acyl donor, but not acyl-CoA. The polypeptide is Phosphate acyltransferase (Aromatoleum aromaticum (strain DSM 19018 / LMG 30748 / EbN1) (Azoarcus sp. (strain EbN1))).